Reading from the N-terminus, the 199-residue chain is uncharacterized protein (199 aa).

This sequence to M.jannaschii MJ1356.

This is an uncharacterized protein from Methanocaldococcus jannaschii (strain ATCC 43067 / DSM 2661 / JAL-1 / JCM 10045 / NBRC 100440) (Methanococcus jannaschii).